A 313-amino-acid polypeptide reads, in one-letter code: Aspartate carbamoyltransferase catalytic subunit (313 aa).

Carbamoyl phosphate contacts are provided by Arg53 and Thr54. Lys82 is a binding site for L-aspartate. Residues Arg103, His131, and Gln134 each coordinate carbamoyl phosphate. L-aspartate contacts are provided by Arg163 and Arg224. Positions 263 and 264 each coordinate carbamoyl phosphate.

It belongs to the aspartate/ornithine carbamoyltransferase superfamily. ATCase family. Heterooligomer of catalytic and regulatory chains.

It catalyses the reaction carbamoyl phosphate + L-aspartate = N-carbamoyl-L-aspartate + phosphate + H(+). The protein operates within pyrimidine metabolism; UMP biosynthesis via de novo pathway; (S)-dihydroorotate from bicarbonate: step 2/3. Functionally, catalyzes the condensation of carbamoyl phosphate and aspartate to form carbamoyl aspartate and inorganic phosphate, the committed step in the de novo pyrimidine nucleotide biosynthesis pathway. The polypeptide is Aspartate carbamoyltransferase catalytic subunit (Halorubrum lacusprofundi (strain ATCC 49239 / DSM 5036 / JCM 8891 / ACAM 34)).